A 486-amino-acid chain; its full sequence is 6-phosphogluconate dehydrogenase, decarboxylating 2 (486 aa).

NADP(+)-binding positions include 12 to 17 (GLAVMG), 35 to 37 (NRT), 79 to 81 (VKA), and Asn107. Residues Asn107 and 133–135 (SGG) each bind substrate. Lys188 serves as the catalytic Proton acceptor. 191-192 (HN) is a binding site for substrate. Glu195 (proton donor) is an active-site residue. Residues Tyr196, Lys266, Arg293, Arg456, and His462 each contribute to the substrate site. The Microbody targeting signal motif lies at 484-486 (SKI).

Belongs to the 6-phosphogluconate dehydrogenase family. Forms homodimer. Forms heterodimers with PGD1 or PGD3.

The protein localises to the cytoplasm. The protein resides in the cytosol. Its subcellular location is the peroxisome. The catalysed reaction is 6-phospho-D-gluconate + NADP(+) = D-ribulose 5-phosphate + CO2 + NADPH. It functions in the pathway carbohydrate degradation; pentose phosphate pathway; D-ribulose 5-phosphate from D-glucose 6-phosphate (oxidative stage): step 3/3. Catalyzes the oxidative decarboxylation of 6-phosphogluconate to ribulose 5-phosphate and CO(2), with concomitant reduction of NADP to NADPH. Required for guided growth of the male gametophytes and interaction between the pollen tube and the ovule. The chain is 6-phosphogluconate dehydrogenase, decarboxylating 2 from Arabidopsis thaliana (Mouse-ear cress).